We begin with the raw amino-acid sequence, 477 residues long: tRNA-2-methylthio-N(6)-dimethylallyladenosine synthase (477 aa).

In terms of domain architecture, MTTase N-terminal spans 3 to 120; that stretch reads KKLYIKTWGC…LPEMINELKG (118 aa). [4Fe-4S] cluster is bound by residues Cys-12, Cys-49, Cys-83, Cys-157, Cys-161, and Cys-164. The Radical SAM core domain occupies 143–375; sequence RAEGPTAFVS…QQRITQQALR (233 aa). The TRAM domain occupies 378–441; the sequence is RHMVGTEQRI…TNSLRGEVVR (64 aa).

The protein belongs to the methylthiotransferase family. MiaB subfamily. In terms of assembly, monomer. [4Fe-4S] cluster is required as a cofactor.

It is found in the cytoplasm. The enzyme catalyses N(6)-dimethylallyladenosine(37) in tRNA + (sulfur carrier)-SH + AH2 + 2 S-adenosyl-L-methionine = 2-methylsulfanyl-N(6)-dimethylallyladenosine(37) in tRNA + (sulfur carrier)-H + 5'-deoxyadenosine + L-methionine + A + S-adenosyl-L-homocysteine + 2 H(+). In terms of biological role, catalyzes the methylthiolation of N6-(dimethylallyl)adenosine (i(6)A), leading to the formation of 2-methylthio-N6-(dimethylallyl)adenosine (ms(2)i(6)A) at position 37 in tRNAs that read codons beginning with uridine. This is tRNA-2-methylthio-N(6)-dimethylallyladenosine synthase from Alteromonas mediterranea (strain DSM 17117 / CIP 110805 / LMG 28347 / Deep ecotype).